The sequence spans 628 residues: Exonuclease V, mitochondrial (628 aa).

Residues 1–21 (MSRFWHFKKFYFTSCYSMQRM) constitute a mitochondrion transit peptide. The segment at 37-58 (TSEHEQVQSISKEESRSLSSND) is disordered. Residues 38–52 (SEHEQVQSISKEESR) show a composition bias toward basic and acidic residues. [4Fe-4S] cluster contacts are provided by Cys-164, Cys-586, Cys-589, and Cys-595.

It belongs to the EXO5 family. As to quaternary structure, monomer. It depends on Mg(2+) as a cofactor. Requires [4Fe-4S] cluster as cofactor.

It localises to the mitochondrion. Its function is as follows. Single strand DNA specific 5' exonuclease involved in mitochondrial DNA replication and recombination. Releases dinucleotides as main products of catalysis. Has the capacity to slide across 5'double-stranded DNA or 5'RNA sequences and resumes cutting two nucleotides downstream of the double-stranded-to-single-stranded junction or RNA-to-DNA junction, respectively. The protein is Exonuclease V, mitochondrial (DEM1) of Candida albicans (strain SC5314 / ATCC MYA-2876) (Yeast).